Here is a 296-residue protein sequence, read N- to C-terminus: MDAKQTRQGVLLALAAYFIWGIAPAYFKLIYYVPADEILTHRVIWSFFFMVVLMSICRQWSYLKTLIQTPQKIFMLAVSAVLIGGNWLLFIWAVNNHHMLEASLGYFINPLVNIVLGMIFLGERFRRMQWLAVILAICGVLVQLWTFGSLPIIALGLAFSFAFYGLVRKKIAVEAQTGMLIETMWLLPVAAIYLFAIADSSTSHMGQNPMSLNLLLIAAGIVTTVPLLCFTAAATRLRLSTLGFFQYIGPTLMFLLAVTFYGEKPGADKMVTFAFIWVALAIFVMDAIYTQRRTSK.

Residues 1–11 are Cytoplasmic-facing; it reads MDAKQTRQGVL. Residues 12 to 34 traverse the membrane as a helical segment; that stretch reads LALAAYFIWGIAPAYFKLIYYVP. The 128-residue stretch at 18–145 folds into the EamA domain; that stretch reads FIWGIAPAYF…AICGVLVQLW (128 aa). Topologically, residues 35-37 are periplasmic; the sequence is ADE. A helical membrane pass occupies residues 38-60; sequence ILTHRVIWSFFFMVVLMSICRQW. Residues 61–72 lie on the Cytoplasmic side of the membrane; sequence SYLKTLIQTPQK. The chain crosses the membrane as a helical span at residues 73-95; the sequence is IFMLAVSAVLIGGNWLLFIWAVN. Topologically, residues 96–99 are periplasmic; the sequence is NHHM. Residues 100 to 122 form a helical membrane-spanning segment; that stretch reads LEASLGYFINPLVNIVLGMIFLG. Residues 123-128 are Cytoplasmic-facing; the sequence is ERFRRM. Residues 129 to 146 traverse the membrane as a helical segment; that stretch reads QWLAVILAICGVLVQLWT. Residues 147-149 lie on the Periplasmic side of the membrane; it reads FGS. The helical transmembrane segment at 150-167 threads the bilayer; that stretch reads LPIIALGLAFSFAFYGLV. At 168 to 179 the chain is on the cytoplasmic side; that stretch reads RKKIAVEAQTGM. Residues 180–197 traverse the membrane as a helical segment; the sequence is LIETMWLLPVAAIYLFAI. At 198 to 211 the chain is on the periplasmic side; that stretch reads ADSSTSHMGQNPMS. A helical membrane pass occupies residues 212-234; sequence LNLLLIAAGIVTTVPLLCFTAAA. Topologically, residues 235–238 are cytoplasmic; that stretch reads TRLR. The chain crosses the membrane as a helical span at residues 239–261; sequence LSTLGFFQYIGPTLMFLLAVTFY. The Periplasmic segment spans residues 262 to 270; the sequence is GEKPGADKM. The helical transmembrane segment at 271-290 threads the bilayer; that stretch reads VTFAFIWVALAIFVMDAIYT. Over 291-296 the chain is Cytoplasmic; the sequence is QRRTSK.

It belongs to the EamA transporter family.

Its subcellular location is the cell inner membrane. The sequence is that of Protein RarD (rarD) from Escherichia coli (strain K12).